The chain runs to 71 residues: uncharacterized protein (71 aa).

This is an uncharacterized protein from Lepidoptera (butterflies and moths).